A 301-amino-acid polypeptide reads, in one-letter code: Oxygen-dependent coproporphyrinogen-III oxidase (301 aa).

S90 contacts substrate. 2 residues coordinate a divalent metal cation: H94 and H104. The active-site Proton donor is the H104. 106 to 108 (NVR) is a substrate binding site. Residues H143 and H173 each contribute to the a divalent metal cation site. The segment at 238 to 273 (YVEFNLVWDRGTLFGLQSGGRTESILMSLPPIVKWR) is important for dimerization. Substrate is bound at residue 256–258 (GGR).

This sequence belongs to the aerobic coproporphyrinogen-III oxidase family. As to quaternary structure, homodimer. A divalent metal cation is required as a cofactor.

It localises to the cytoplasm. The enzyme catalyses coproporphyrinogen III + O2 + 2 H(+) = protoporphyrinogen IX + 2 CO2 + 2 H2O. Its pathway is porphyrin-containing compound metabolism; protoporphyrin-IX biosynthesis; protoporphyrinogen-IX from coproporphyrinogen-III (O2 route): step 1/1. In terms of biological role, involved in the heme biosynthesis. Catalyzes the aerobic oxidative decarboxylation of propionate groups of rings A and B of coproporphyrinogen-III to yield the vinyl groups in protoporphyrinogen-IX. This is Oxygen-dependent coproporphyrinogen-III oxidase from Nitrosomonas eutropha (strain DSM 101675 / C91 / Nm57).